A 312-amino-acid chain; its full sequence is Ribosomal protein L11 methyltransferase (312 aa).

Positions 162, 183, 205, and 248 each coordinate S-adenosyl-L-methionine.

It belongs to the methyltransferase superfamily. PrmA family.

The protein localises to the cytoplasm. It catalyses the reaction L-lysyl-[protein] + 3 S-adenosyl-L-methionine = N(6),N(6),N(6)-trimethyl-L-lysyl-[protein] + 3 S-adenosyl-L-homocysteine + 3 H(+). Methylates ribosomal protein L11. In Bacillus cereus (strain Q1), this protein is Ribosomal protein L11 methyltransferase.